We begin with the raw amino-acid sequence, 233 residues long: Small ribosomal subunit protein uS3 (233 aa).

In terms of domain architecture, KH type-2 spans 39–107; sequence VREFLKKRLG…PVHVNIEEVR (69 aa). Residues 212–233 form a disordered region; the sequence is VQATPAAPEKKMRKGARNAAAN.

Belongs to the universal ribosomal protein uS3 family. Part of the 30S ribosomal subunit. Forms a tight complex with proteins S10 and S14.

Functionally, binds the lower part of the 30S subunit head. Binds mRNA in the 70S ribosome, positioning it for translation. The protein is Small ribosomal subunit protein uS3 of Chromobacterium violaceum (strain ATCC 12472 / DSM 30191 / JCM 1249 / CCUG 213 / NBRC 12614 / NCIMB 9131 / NCTC 9757 / MK).